Here is a 141-residue protein sequence, read N- to C-terminus: Flagellar assembly factor FliW 1 (141 aa).

Belongs to the FliW family. Interacts with translational regulator CsrA and flagellin(s).

It is found in the cytoplasm. Acts as an anti-CsrA protein, binds CsrA and prevents it from repressing translation of its target genes, one of which is flagellin. Binds to flagellin and participates in the assembly of the flagellum. In Desulfotalea psychrophila (strain LSv54 / DSM 12343), this protein is Flagellar assembly factor FliW 1.